A 238-amino-acid chain; its full sequence is Enolase-phosphatase E1 (238 aa).

Belongs to the HAD-like hydrolase superfamily. MasA/MtnC family. As to quaternary structure, monomer. The cofactor is Mg(2+).

It carries out the reaction 5-methylsulfanyl-2,3-dioxopentyl phosphate + H2O = 1,2-dihydroxy-5-(methylsulfanyl)pent-1-en-3-one + phosphate. It participates in amino-acid biosynthesis; L-methionine biosynthesis via salvage pathway; L-methionine from S-methyl-5-thio-alpha-D-ribose 1-phosphate: step 3/6. The protein operates within amino-acid biosynthesis; L-methionine biosynthesis via salvage pathway; L-methionine from S-methyl-5-thio-alpha-D-ribose 1-phosphate: step 4/6. Bifunctional enzyme that catalyzes the enolization of 2,3-diketo-5-methylthiopentyl-1-phosphate (DK-MTP-1-P) into the intermediate 2-hydroxy-3-keto-5-methylthiopentenyl-1-phosphate (HK-MTPenyl-1-P), which is then dephosphorylated to form the acireductone 1,2-dihydroxy-3-keto-5-methylthiopentene (DHK-MTPene). This Synechococcus elongatus (strain ATCC 33912 / PCC 7942 / FACHB-805) (Anacystis nidulans R2) protein is Enolase-phosphatase E1.